We begin with the raw amino-acid sequence, 543 residues long: Zinc finger protein tra-4 (543 aa).

The segment at 1–38 is disordered; it reads MDDPNQCTIKQEDSITRPRPTEAPTIQNLKQEPAIEEG. Positions 10–20 are enriched in basic and acidic residues; that stretch reads KQEDSITRPRP. C2H2-type zinc fingers lie at residues 218 to 241, 327 to 350, 381 to 406, 413 to 436, 442 to 464, 470 to 493, and 495 to 518; these read VRCK…RDKH, PQCP…AKKH, YVCF…KKFH, FRCS…KMSH, FQCH…ERMH, FECK…RDEH, and YVCA…YEEH.

The protein belongs to the krueppel C2H2-type zinc-finger protein family. Interacts with histone deacetylase hda-1. May interact with nasp-1.

Its subcellular location is the nucleus. Functionally, probable transcription factor. Promotes normal hermaphrodite (XX) development, in concert with histone deacetylase hda-1 and nasp-1, perhaps as components of a complex. May cooperate with transcription factor tra-1 to repress male-specific genes in hermaphrodites. Synthetic multivulva (synMuv) class B protein, required to repress the induction of vulval development by let-60 Ras signaling. This is Zinc finger protein tra-4 from Caenorhabditis elegans.